Reading from the N-terminus, the 853-residue chain is Cytochrome P450 monooxygenase mpaDE (853 aa).

Topologically, residues 1-6 (MKSLSL) are lumenal. Residues 7–29 (TWITAVAVVLYLVQRYVRSYWRL) form a helical membrane-spanning segment. Residues 30-853 (KDIPGPVLAK…DIENSIEGQK (824 aa)) lie on the Cytoplasmic side of the membrane. Position 449 (Cys-449) interacts with heme.

It belongs to the cytochrome P450 family. Heme is required as a cofactor.

The protein resides in the endoplasmic reticulum membrane. The catalysed reaction is 5-methylorsellinate + reduced [NADPH--hemoprotein reductase] + O2 = 4,6-dihydroxy-2-(hydroxymethyl)-3-methylbenzoate + oxidized [NADPH--hemoprotein reductase] + H2O + H(+). It catalyses the reaction 4,6-dihydroxy-2-(hydroxymethyl)-3-methylbenzoate + H(+) = 5,7-dihydroxy-4-methylphthalide + H2O. Its pathway is secondary metabolite biosynthesis; terpenoid biosynthesis. In terms of biological role, cytochrome P450 monooxygenase; part of the gene cluster that mediates the biosynthesis of mycophenolic acid (MPA), the first isolated antibiotic natural product in the world obtained from a culture of Penicillium brevicompactum in 1893. MpaDE is an endoplasmic reticulum-bound enzyme that catalyzes the conversion of 5-methylorsellinic acid (5MOA) into the phthalide compound 5,7-dihydroxy-4,6-dimethylphthalide (DHMP). MpaDE first catalyzes hydroxylation of 5-MOA to 4,6-dihydroxy-2-(hydroxymethyl)-3-methylbenzoic acid (DHMB), and then acts as a lactone synthase that catalyzes the ring closure to convert DHMB into DHMP. The first step of the pathway is the synthesis of 5-methylorsellinic acid (5MOA) by the cytosolic polyketide synthase mpaC. 5MOA is then converted to the phthalide compound 5,7-dihydroxy-4,6-dimethylphthalide (DHMP) by the endoplasmic reticulum-bound cytochrome P450 monooxygenase mpaDE. MpaDE first catalyzes hydroxylation of 5-MOA to 4,6-dihydroxy-2-(hydroxymethyl)-3-methylbenzoic acid (DHMB). MpaDE then acts as a lactone synthase that catalyzes the ring closure to convert DHMB into DHMP. The next step is the prenylation of DHMP by the Golgi apparatus-associated prenyltransferase mpaA to yield farnesyl-DHMP (FDHMP). The ER-bound oxygenase mpaB then mediates the oxidative cleavage the C19-C20 double bond in FDHMP to yield FDHMP-3C via a mycophenolic aldehyde intermediate. The O-methyltransferase mpaG catalyzes the methylation of FDHMP-3C to yield MFDHMP-3C. After the cytosolic methylation of FDHMP-3C, MFDHMP-3C enters into peroxisomes probably via free diffusion due to its low molecular weight. Upon a peroxisomal CoA ligation reaction, catalyzed by a beta-oxidation component enzyme acyl-CoA ligase ACL891, MFDHMP-3C-CoA would then be restricted to peroxisomes for the following beta-oxidation pathway steps. The peroxisomal beta-oxidation machinery than converts MFDHMP-3C-CoA into MPA_CoA, via a beta-oxidation chain-shortening process. Finally mpaH acts as a peroxisomal acyl-CoA hydrolase with high substrate specificity toward MPA-CoA to release the final product MPA. This is Cytochrome P450 monooxygenase mpaDE from Penicillium brevicompactum.